A 357-amino-acid chain; its full sequence is Golgi to ER traffic protein 2 (357 aa).

Residues methionine 1–leucine 224 lie on the Cytoplasmic side of the membrane. Residues threonine 65–serine 81 show a composition bias toward low complexity. A disordered region spans residues threonine 65–serine 99. Over residues threonine 88 to isoleucine 98 the composition is skewed to polar residues. A helical transmembrane segment spans residues tryptophan 225–phenylalanine 245. Residues isoleucine 246–glycine 270 are Lumenal-facing. A helical transmembrane segment spans residues phenylalanine 271–phenylalanine 290. Over threonine 291–glutamate 334 the chain is Cytoplasmic. The helical transmembrane segment at leucine 335–phenylalanine 355 threads the bilayer. Topologically, residues serine 356–asparagine 357 are lumenal.

The protein belongs to the GET2 family. Component of the Golgi to ER traffic (GET) complex, which is composed of GET1, GET2 and GET3. Within the complex, GET1 and GET2 form a heterotetramer which is stabilized by phosphatidylinositol binding and which binds to the GET3 homodimer.

The protein resides in the endoplasmic reticulum membrane. It localises to the golgi apparatus membrane. In terms of biological role, required for the post-translational delivery of tail-anchored (TA) proteins to the endoplasmic reticulum. Together with GET1, acts as a membrane receptor for soluble GET3, which recognizes and selectively binds the transmembrane domain of TA proteins in the cytosol. The GET complex cooperates with the HDEL receptor ERD2 to mediate the ATP-dependent retrieval of resident ER proteins that contain a C-terminal H-D-E-L retention signal from the Golgi to the ER. The polypeptide is Golgi to ER traffic protein 2 (Lodderomyces elongisporus (strain ATCC 11503 / CBS 2605 / JCM 1781 / NBRC 1676 / NRRL YB-4239) (Yeast)).